A 503-amino-acid chain; its full sequence is Glutamate--tRNA ligase (503 aa).

A 'HIGH' region motif is present at residues 14 to 24 (PSPTGSLHIGG). Positions 261–265 (KLSKR) match the 'KMSKS' region motif. An ATP-binding site is contributed by Lys264.

Belongs to the class-I aminoacyl-tRNA synthetase family. Glutamate--tRNA ligase type 1 subfamily. Monomer.

The protein resides in the cytoplasm. The enzyme catalyses tRNA(Glu) + L-glutamate + ATP = L-glutamyl-tRNA(Glu) + AMP + diphosphate. In terms of biological role, catalyzes the attachment of glutamate to tRNA(Glu) in a two-step reaction: glutamate is first activated by ATP to form Glu-AMP and then transferred to the acceptor end of tRNA(Glu). The sequence is that of Glutamate--tRNA ligase from Chloroflexus aurantiacus (strain ATCC 29366 / DSM 635 / J-10-fl).